The primary structure comprises 548 residues: Stretch-activated cation channel MID1 (548 aa).

Positions 1-20 are cleaved as a signal peptide; sequence MIVWQALFVVYCLFTTSIHG. The Extracellular segment spans residues 21–341; that stretch reads LFQDFNPFAN…YLTKKISNGD (321 aa). Asn-32, Asn-70, Asn-112, Asn-125, Asn-159, Asn-175, Asn-228, Asn-238, Asn-265, Asn-282, Asn-285, Asn-291, and Asn-324 each carry an N-linked (GlcNAc...) asparagine glycan. The chain crosses the membrane as a helical span at residues 342–358; the sequence is GLSSVGGILFSHVYFTT. At 359-548 the chain is on the cytoplasmic side; sequence RSTDVCSLIF…LMVIHPLDDT (190 aa).

Forms an oligomer with a molecular mass of 200 kDa by disulfide bonds. Interacts with CCH1 to form a Ca(2+) influx channel. In terms of processing, N-glycosylated.

The protein localises to the cell membrane. Calcium-permeable, cation-selective stretch-activated channel (SAC) that functions together with CCH1 to mediate calcium entry into cells. Required during mating. Together with CCH1, essential for tolerance to iron stress, which leads to an increased oxidative poise, and to cold stress. The polypeptide is Stretch-activated cation channel MID1 (MID1) (Saccharomyces cerevisiae (strain ATCC 204508 / S288c) (Baker's yeast)).